Reading from the N-terminus, the 886-residue chain is uncharacterized protein (886 aa).

Positions 1 to 20 are cleaved as a signal peptide; it reads MKIIKSLILLVLFMASPAKG. 5 helical membrane passes run 520 to 540, 609 to 629, 647 to 667, 680 to 700, and 779 to 799; these read VTIF…VEVV, LLFI…IITI, VIAF…IILM, ISIL…FLLI, and LLFY…TIVV. Residues 856-886 form a disordered region; it reads EARKPQGGGEHTGKFFQNRNDVKPEQTERND. The span at 875–886 shows a compositional bias: basic and acidic residues; the sequence is NDVKPEQTERND.

Belongs to the TrbL/VirB6 family.

Its subcellular location is the cell membrane. This is an uncharacterized protein from Rickettsia bellii (strain RML369-C).